A 390-amino-acid chain; its full sequence is Zinc transporter 7 (390 aa).

Residues 1–37 lie on the Cytoplasmic side of the membrane; the sequence is MLPLSIKDDEYKPPKFNLVRKVSGWIRSIFSDTTSRN. A helical membrane pass occupies residues 38-58; the sequence is LFCFLCLNLSFAFVELFYGIW. The Lumenal segment spans residues 59–67; sequence SNSLGLISD. Residues 68-88 form a helical membrane-spanning segment; sequence SFHMFFDCTALLAGLAASVIS. Topologically, residues 89 to 102 are cytoplasmic; that stretch reads RWKTNEAFSYGYVR. Residues 103-123 traverse the membrane as a helical segment; sequence AEVLAGFVNGLFLIFTAFFIF. Topologically, residues 124–140 are lumenal; the sequence is SEGIERALDTPEVHHER. The helical transmembrane segment at 141–161 threads the bilayer; sequence LLPVSILGFLVNLIGIFVFQH. The his-rich loop stretch occupies residues 161–226; that stretch reads HGGGHGHSHE…SHDQSHKHGH (66 aa). Topologically, residues 162-250 are cytoplasmic; that stretch reads GGGHGHSHES…TGSSKQILEG (89 aa). The interval 167–243 is disordered; it reads HSHESGHGHS…DEPPEEHTGS (77 aa). Over residues 177–186 the composition is skewed to low complexity; the sequence is HSLFNGSLSH. Basic residues predominate over residues 187 to 208; that stretch reads GHSHSHGGSHGHSHGGGHGHSH. Basic and acidic residues-rich tracts occupy residues 209–222 and 232–242; these read SHGE…DQSH and CHDEPPEEHTG. The helical transmembrane segment at 251-271 threads the bilayer; sequence VFLHIVADALGSVGVIISTIL. Residues 272–276 are Lumenal-facing; it reads MQRYG. A helical membrane pass occupies residues 277 to 297; sequence LMIADPICSMLIALLIFVSVI. Over 298-390 the chain is Cytoplasmic; the sequence is PLLKQSIGIL…LYVQIDMAAM (93 aa).

The protein belongs to the cation diffusion facilitator (CDF) transporter (TC 2.A.4) family. SLC30A subfamily. Homooligomer.

It localises to the golgi apparatus membrane. Its subcellular location is the cytoplasmic vesicle. The protein resides in the golgi apparatus. The protein localises to the trans-Golgi network. It is found in the sarcoplasmic reticulum. It localises to the mitochondrion. It carries out the reaction Zn(2+)(in) = Zn(2+)(out). In terms of biological role, zinc ion transporter mediating zinc entry from the cytosol into the lumen of organelles along the secretory pathway. By contributing to zinc ion homeostasis within the early secretory pathway, regulates the activation and folding of enzymes like alkaline phosphatases. This Xenopus tropicalis (Western clawed frog) protein is Zinc transporter 7 (slc30a7).